A 230-amino-acid polypeptide reads, in one-letter code: LexA repressor (230 aa).

The H-T-H motif DNA-binding region spans 28–48 (LREIGAHMGIRSTNGVNDHLR). Active-site for autocatalytic cleavage activity residues include S149 and K186.

This sequence belongs to the peptidase S24 family. Homodimer.

It carries out the reaction Hydrolysis of Ala-|-Gly bond in repressor LexA.. Functionally, represses a number of genes involved in the response to DNA damage (SOS response), including recA and lexA. In the presence of single-stranded DNA, RecA interacts with LexA causing an autocatalytic cleavage which disrupts the DNA-binding part of LexA, leading to derepression of the SOS regulon and eventually DNA repair. The polypeptide is LexA repressor (Sorangium cellulosum (strain So ce56) (Polyangium cellulosum (strain So ce56))).